The sequence spans 147 residues: MDIQRTQSLLLLLLLTLLGLGLVQPSYGQDRMYQRFLRQHVDPEGTGGSDNYCNVMMQRRRMTSTQCKRFNTFIHEDIWNIRSICDTANIPCKNGNMNCHEGIVRVTDCRETGSSVPHNCRYRARASTRRVVIACEGTPEVPVHFDR.

The first 28 residues, 1-28 (MDIQRTQSLLLLLLLTLLGLGLVQPSYG), serve as a signal peptide directing secretion. At glutamine 29 the chain carries Pyrrolidone carboxylic acid. Residues arginine 35, histidine 40, lysine 68, asparagine 71, and threonine 72 each coordinate dUMP. The active-site Proton acceptor is histidine 40. 4 disulfide bridges follow: cysteine 53-cysteine 109, cysteine 67-cysteine 120, cysteine 85-cysteine 135, and cysteine 92-cysteine 99. Histidine 144 serves as the catalytic Proton donor. Phenylalanine 145 provides a ligand contact to dUMP.

Belongs to the pancreatic ribonuclease family.

Its subcellular location is the secreted. Its function is as follows. Cleaves preferentially after uridine bases. Has antimicrobial activity against uropathogenic E.coli (UPEC). Probably contributes to urinary tract sterility. The sequence is that of Ribonuclease 4 (Rnase4) from Rattus norvegicus (Rat).